Here is a 733-residue protein sequence, read N- to C-terminus: Protein OBERON 3 (733 aa).

A compositionally biased stretch (basic and acidic residues) spans 1-15; that stretch reads MIGEKDLAGDGECSR. Disordered stretches follow at residues 1–42 and 118–142; these read MIGE…YHQK and NPNSSKRKAHEEEEEAEEEEDKKSN. A compositionally biased stretch (polar residues) spans 21-30; it reads PRFSNLNNQT. Residues 120–153 are a coiled coil; it reads NSSKRKAHEEEEEAEEEEDKKSNKIETLNLSLAL. The PHD-type zinc-finger motif lies at 436–500; sequence SCMCPVCLRF…MFHCIGCAHK (65 aa). The disordered stretch occupies residues 592-614; that stretch reads VAAETSYRKDEASVTPSTSKDQK. The stretch at 644–733 forms a coiled coil; the sequence is MFQKKADEAR…RMEVTRQQLV (90 aa).

As to quaternary structure, self-interacts. Interacts with OBE1 and OBE2. Interacts with OBE4.

Its subcellular location is the nucleus. Probable transcription factor that functions redundantly with OBE4 in specification of the hypophysis and establishment of the embryonic root. Involved in the activation of ARF5/MP-dependent gene expression during embryonic root meristem initiation. Involved in shoot meristem homeostasis. The sequence is that of Protein OBERON 3 from Arabidopsis thaliana (Mouse-ear cress).